The following is a 125-amino-acid chain: Large ribosomal subunit protein bL12 (125 aa).

It belongs to the bacterial ribosomal protein bL12 family. As to quaternary structure, homodimer. Part of the ribosomal stalk of the 50S ribosomal subunit. Forms a multimeric L10(L12)X complex, where L10 forms an elongated spine to which 2 to 4 L12 dimers bind in a sequential fashion. Binds GTP-bound translation factors.

Its function is as follows. Forms part of the ribosomal stalk which helps the ribosome interact with GTP-bound translation factors. Is thus essential for accurate translation. The polypeptide is Large ribosomal subunit protein bL12 (Delftia acidovorans (strain DSM 14801 / SPH-1)).